The sequence spans 410 residues: Mitochondrial potassium channel (410 aa).

Residues 1-35 constitute a mitochondrion transit peptide; the sequence is MTGCSPVFTMQQVVGVSHRLVWRTFRGTDLLMTRT. The Mitochondrial matrix segment spans residues 36–201; it reads LCSPGPSRPG…KERTRAERTK (166 aa). The stretch at 116-143 forms a coiled coil; that stretch reads VREAREDLEAQQTKLKEVRDRLDRVSRE. A helical transmembrane segment spans residues 202 to 222; sequence NWSLIGSVLGALIGVAGSTYV. The Mitochondrial intermembrane portion of the chain corresponds to 223-385; sequence NRVRLQELKA…RLEAQANRNA (163 aa). The disordered stretch occupies residues 276–296; sequence GQDQGSGSPTGPSSPRGKDID. A compositionally biased stretch (low complexity) spans 280-290; the sequence is GSGSPTGPSSP. The helical transmembrane segment at 386-406 threads the bilayer; that stretch reads ISSTLVTCVTFMATLPLLYML. The Mitochondrial matrix portion of the chain corresponds to 407-410; the sequence is FKTS.

The mitochondrial potassium channel (mitoK(ATP)) forms a heteromultimer.

The protein resides in the mitochondrion inner membrane. The catalysed reaction is K(+)(in) = K(+)(out). Channel activity inhibited by ATP via ABCB8/MITOSUR subunit. Pore-forming subunit of the mitochondrial ATP-gated potassium channel (mitoK(ATP)). Together with ATP-binding subunit ABCB8/MITOSUR of the mitoK(ATP) channel, mediates ATP-dependent K(+) currents across the mitochondrial inner membrane. An increase in ATP intracellular levels closes the channel, inhibiting K(+) transport, whereas a decrease in ATP levels enhances K(+) uptake in the mitochondrial matrix. May contribute to the homeostatic control of cellular metabolism under stress conditions by regulating the mitochondrial matrix volume. This is Mitochondrial potassium channel from Rattus norvegicus (Rat).